Consider the following 176-residue polypeptide: ATP-dependent protease subunit HslV (176 aa).

Thr6 is an active-site residue. 3 residues coordinate Na(+): Ser161, Cys164, and Thr167.

Belongs to the peptidase T1B family. HslV subfamily. A double ring-shaped homohexamer of HslV is capped on each side by a ring-shaped HslU homohexamer. The assembly of the HslU/HslV complex is dependent on binding of ATP.

It is found in the cytoplasm. The catalysed reaction is ATP-dependent cleavage of peptide bonds with broad specificity.. Allosterically activated by HslU binding. Protease subunit of a proteasome-like degradation complex believed to be a general protein degrading machinery. The protein is ATP-dependent protease subunit HslV of Thermosipho melanesiensis (strain DSM 12029 / CIP 104789 / BI429).